Here is a 117-residue protein sequence, read N- to C-terminus: DNA-binding protein DDB_G0278111 (117 aa).

Residues 1–40 (MSSEKEIQQQLSQMQGQGFDPEAQQRQEAQRQEANERRQG) form a disordered region. The segment covering 8–22 (QQQLSQMQGQGFDPE) has biased composition (low complexity). Over residues 23-39 (AQQRQEAQRQEANERRQ) the composition is skewed to basic and acidic residues.

This sequence belongs to the PDCD5 family.

This is DNA-binding protein DDB_G0278111 from Dictyostelium discoideum (Social amoeba).